Consider the following 310-residue polypeptide: Probable endonuclease 4 (310 aa).

A disordered region spans residues 1–31 (MNNQQSRGALGTSGATPDLPDATPGLSRNPV). Histidine 94, histidine 134, glutamate 173, aspartate 207, histidine 210, histidine 244, aspartate 257, histidine 259, and glutamate 289 together coordinate Zn(2+).

The protein belongs to the AP endonuclease 2 family. Zn(2+) is required as a cofactor.

It carries out the reaction Endonucleolytic cleavage to 5'-phosphooligonucleotide end-products.. Functionally, endonuclease IV plays a role in DNA repair. It cleaves phosphodiester bonds at apurinic or apyrimidinic (AP) sites, generating a 3'-hydroxyl group and a 5'-terminal sugar phosphate. This Streptomyces avermitilis (strain ATCC 31267 / DSM 46492 / JCM 5070 / NBRC 14893 / NCIMB 12804 / NRRL 8165 / MA-4680) protein is Probable endonuclease 4.